The following is a 130-amino-acid chain: uncharacterized protein (130 aa).

An HTH cro/C1-type domain is found at 19–73; sequence IYSLRLAKGLSRQQLAEVIDVTHQQLQKYEKAINRISVGRLVLIAEALDRNIDYF. The H-T-H motif DNA-binding region spans 30–49; that stretch reads RQQLAEVIDVTHQQLQKYEK.

This is an uncharacterized protein from Rickettsia prowazekii (strain Madrid E).